A 187-amino-acid polypeptide reads, in one-letter code: Calmodulin-like protein 1 (187 aa).

Ala-2 carries the N-acetylalanine modification. EF-hand domains are found at residues Glu-8–Asn-43, Pro-44–Asp-79, Asp-81–Arg-116, and Leu-117–Arg-152. 19 residues coordinate Ca(2+): Asp-21, Asp-23, Asp-25, Ser-27, Glu-32, Asp-57, Asp-59, Asn-61, Asn-63, Glu-68, Asp-94, Asp-96, Asn-98, Glu-105, Asp-130, Asp-132, Asp-134, Gln-136, and Glu-141. Positions Lys-153 to Leu-187 are disordered. Over residues Arg-154–Ser-165 the composition is skewed to basic and acidic residues. Residues Ser-169–Ser-178 are compositionally biased toward low complexity. Cys-184 is subject to Cysteine methyl ester. Cys-184 carries S-farnesyl cysteine lipidation. The propeptide at Val-185–Leu-187 is removed in mature form.

It belongs to the calmodulin family.

It localises to the membrane. Its function is as follows. Calcium-binding protein that binds and activates CAMK1, a calcium/calmodulin-dependent kinase. The protein is Calmodulin-like protein 1 (CML1) of Oryza sativa subsp. japonica (Rice).